The sequence spans 154 residues: 3-hydroxyacyl-[acyl-carrier-protein] dehydratase FabZ (154 aa).

The active site involves His54.

The protein belongs to the thioester dehydratase family. FabZ subfamily.

It localises to the cytoplasm. It carries out the reaction a (3R)-hydroxyacyl-[ACP] = a (2E)-enoyl-[ACP] + H2O. Functionally, involved in unsaturated fatty acids biosynthesis. Catalyzes the dehydration of short chain beta-hydroxyacyl-ACPs and long chain saturated and unsaturated beta-hydroxyacyl-ACPs. The sequence is that of 3-hydroxyacyl-[acyl-carrier-protein] dehydratase FabZ from Chlamydia abortus (strain DSM 27085 / S26/3) (Chlamydophila abortus).